Consider the following 339-residue polypeptide: MRVYYDRDADLNLIKGKKVAIVGYGSQGHAHALNLRDSGVKDIVIALREGSATAKKAEHEGFKVLSVAEAAKWADVVMMLTPDELQGDIYRESLEGNMKQGAALLFAHGLNVHFNLIEPRKDLDVLMVAPKGPGHTVRSEYLRGGGVPTLIAIAQDASGNAHDLGLSYASANGGGRAGIIETTFKEECETDLFGEQAVLCGGLVELIKAGFETLVEAGYAPEMAYFECLHEVKLIVDLIYEGGIANMNYSISNTAEYGEYVTGPRIVTPETKAEMKRVLNDIQSGTFTRNWMLENKVNQTSFKATRAKLAAHPIEEVGAKLRGMMPWISEKALVDKTRN.

In terms of domain architecture, KARI N-terminal Rossmann spans 1–182 (MRVYYDRDAD…GGGRAGIIET (182 aa)). NADP(+)-binding positions include 24-27 (YGSQ), R48, S51, T53, and 83-86 (DELQ). The active site involves H108. An NADP(+)-binding site is contributed by G134. One can recognise a KARI C-terminal knotted domain in the interval 183 to 328 (TFKEECETDL…AKLRGMMPWI (146 aa)). 4 residues coordinate Mg(2+): D191, E195, E227, and E231. Position 252 (S252) interacts with substrate.

The protein belongs to the ketol-acid reductoisomerase family. The cofactor is Mg(2+).

The enzyme catalyses (2R)-2,3-dihydroxy-3-methylbutanoate + NADP(+) = (2S)-2-acetolactate + NADPH + H(+). It carries out the reaction (2R,3R)-2,3-dihydroxy-3-methylpentanoate + NADP(+) = (S)-2-ethyl-2-hydroxy-3-oxobutanoate + NADPH + H(+). It functions in the pathway amino-acid biosynthesis; L-isoleucine biosynthesis; L-isoleucine from 2-oxobutanoate: step 2/4. It participates in amino-acid biosynthesis; L-valine biosynthesis; L-valine from pyruvate: step 2/4. Involved in the biosynthesis of branched-chain amino acids (BCAA). Catalyzes an alkyl-migration followed by a ketol-acid reduction of (S)-2-acetolactate (S2AL) to yield (R)-2,3-dihydroxy-isovalerate. In the isomerase reaction, S2AL is rearranged via a Mg-dependent methyl migration to produce 3-hydroxy-3-methyl-2-ketobutyrate (HMKB). In the reductase reaction, this 2-ketoacid undergoes a metal-dependent reduction by NADPH to yield (R)-2,3-dihydroxy-isovalerate. This chain is Ketol-acid reductoisomerase (NADP(+)), found in Methylobacterium radiotolerans (strain ATCC 27329 / DSM 1819 / JCM 2831 / NBRC 15690 / NCIMB 10815 / 0-1).